The sequence spans 526 residues: Outer capsid protein VP5 (526 aa).

The interval 1 to 42 (MGKVIRSLSRFGKKVGNALTSNTAKKIYSTIGKAAERFAESE) is involved in membrane permeabilization.

This sequence belongs to the orbivirus VP5 family.

It localises to the virion. In terms of biological role, VP5 protein is one of the two proteins (with VP2) which constitute the virus particle outer capsid. Acts as a membrane permeabilization protein that mediates release of viral particles from endosomal compartments into the cytoplasm. Permeabilization activity is probably negatively regulated by VP2 and is triggered by endosomal degradation of VP2 and exposure to low pH. The chain is Outer capsid protein VP5 (Segment-6) from Bluetongue virus 1 (isolate Australia) (BTV 1).